The chain runs to 334 residues: Putative carboxypeptidase VC_A0337 (334 aa).

S112 acts as the Nucleophile in catalysis. Catalysis depends on charge relay system residues E234 and H302.

It belongs to the peptidase S66 family.

This is Putative carboxypeptidase VC_A0337 from Vibrio cholerae serotype O1 (strain ATCC 39315 / El Tor Inaba N16961).